A 685-amino-acid chain; its full sequence is Delta-like protein 4 (685 aa).

An N-terminal signal peptide occupies residues methionine 1–glycine 26. Residues serine 27–tryptophan 529 are Extracellular-facing. Cystine bridges form between cysteine 50/cysteine 54 and cysteine 61/cysteine 74. Asparagine 108 and asparagine 183 each carry an N-linked (GlcNAc...) asparagine glycan. Positions valine 173–cysteine 217 constitute a DSL domain. A disulfide bond links cysteine 175 and cysteine 184. 2 interaction with Notch1 regions span residues serine 185–leucine 187 and arginine 191–phenylalanine 195. Residues cysteine 188 and cysteine 200 are joined by a disulfide bond. N-linked (GlcNAc...) asparagine glycosylation occurs at asparagine 205. 25 disulfides stabilise this stretch: cysteine 208-cysteine 217, cysteine 222-cysteine 233, cysteine 226-cysteine 239, cysteine 241-cysteine 250, cysteine 253-cysteine 264, cysteine 259-cysteine 270, cysteine 272-cysteine 281, cysteine 288-cysteine 300, cysteine 294-cysteine 310, cysteine 312-cysteine 321, cysteine 328-cysteine 339, cysteine 333-cysteine 348, cysteine 350-cysteine 359, cysteine 366-cysteine 377, cysteine 371-cysteine 388, cysteine 390-cysteine 399, cysteine 406-cysteine 417, cysteine 411-cysteine 426, cysteine 428-cysteine 437, cysteine 444-cysteine 455, cysteine 449-cysteine 464, cysteine 466-cysteine 475, cysteine 484-cysteine 495, cysteine 489-cysteine 506, and cysteine 508-cysteine 517. 8 consecutive EGF-like domains span residues glutamine 218–asparagine 251, glutamate 252–aspartate 282, aspartate 284–glutamate 322, glutamate 324–glutamate 360, serine 362–glutamate 400, lysine 402–glutamate 438, histidine 440–glutamate 476, and serine 480–glutamate 518. The N-linked (GlcNAc...) asparagine glycan is linked to asparagine 393. The helical transmembrane segment at valine 530–valine 550 threads the bilayer. Residues alanine 551–valine 685 lie on the Cytoplasmic side of the membrane.

As to quaternary structure, interacts with NOTCH4. Interacts (via N-terminal DSL and MNNL domains) with NOTCH1 (via EGF-like domains). In terms of tissue distribution, expressed in vascular endothelium.

It is found in the cell membrane. In terms of biological role, involved in the Notch signaling pathway as Notch ligand. Activates NOTCH1 and NOTCH4. Involved in angiogenesis; negatively regulates endothelial cell proliferation and migration and angiogenic sprouting. Essential for retinal progenitor proliferation. Required for suppressing rod fates in late retinal progenitors as well as for proper generation of other retinal cell types. During spinal cord neurogenesis, inhibits V2a interneuron fate. This chain is Delta-like protein 4 (DLL4), found in Homo sapiens (Human).